Consider the following 999-residue polypeptide: Ulvan lyase, long isoform (999 aa).

The N-terminal stretch at 1 to 21 (MKCLKTLLVSTTLLTAFSLNA) is a signal peptide. 126-127 (SH) provides a ligand contact to substrate. His-127 functions as the Proton donor/acceptor in the catalytic mechanism. Asp-189, Asp-199, and Lys-201 together coordinate Ca(2+). Residues Tyr-280 and Arg-297 each coordinate substrate. Ca(2+) is bound by residues Asp-300, Asp-303, and Tyr-305. Tyr-361 is a substrate binding site.

The protein belongs to the polysaccharide lyase 24 family.

In terms of biological role, ulvan lyase involved in ulvan degradation. Ulvan is the main polysaccharide component of the Ulvales (green seaweed) cell wall. It is composed of disaccharide building blocks comprising 3-sulfated rhamnose (Rha3S) linked to D-glucuronic acid (GlcA), L-iduronic acid (IduA), or D-xylose (Xyl). Ulvan lyase catalyzes preferentially the endolytic cleavage of the glycosidic bond between Rha3S and the uronic acid GlcA, but not IduA, producing oligosaccharides that have unsaturated 4-deoxy-L-threo-hex-4-enopyranosiduronic acid (deltaUA) at the non-reducing end. The most abundant end products in the degradation of the ulvan polysaccharide were deltaUA-Rha3S disaccharides and deltaUA-Rha3S-IduA-Rha3S and deltaUA-Rha3S-Xyl-Rha3S tetrasaccharides. The chain is Ulvan lyase, long isoform from Alteromonas sp. (strain LOR).